A 311-amino-acid chain; its full sequence is tRNA-cytidine(32) 2-sulfurtransferase (311 aa).

A PP-loop motif motif is present at residues 47–52 (SGGKDS). The [4Fe-4S] cluster site is built by cysteine 122, cysteine 125, and cysteine 213.

This sequence belongs to the TtcA family. In terms of assembly, homodimer. Mg(2+) serves as cofactor. [4Fe-4S] cluster is required as a cofactor.

It is found in the cytoplasm. It carries out the reaction cytidine(32) in tRNA + S-sulfanyl-L-cysteinyl-[cysteine desulfurase] + AH2 + ATP = 2-thiocytidine(32) in tRNA + L-cysteinyl-[cysteine desulfurase] + A + AMP + diphosphate + H(+). Its pathway is tRNA modification. Catalyzes the ATP-dependent 2-thiolation of cytidine in position 32 of tRNA, to form 2-thiocytidine (s(2)C32). The sulfur atoms are provided by the cysteine/cysteine desulfurase (IscS) system. This is tRNA-cytidine(32) 2-sulfurtransferase from Pectobacterium atrosepticum (strain SCRI 1043 / ATCC BAA-672) (Erwinia carotovora subsp. atroseptica).